Reading from the N-terminus, the 145-residue chain is D-aminoacyl-tRNA deacylase (145 aa).

A Gly-cisPro motif, important for rejection of L-amino acids motif is present at residues 137–138 (GP).

The protein belongs to the DTD family. Homodimer.

Its subcellular location is the cytoplasm. It catalyses the reaction glycyl-tRNA(Ala) + H2O = tRNA(Ala) + glycine + H(+). The catalysed reaction is a D-aminoacyl-tRNA + H2O = a tRNA + a D-alpha-amino acid + H(+). Functionally, an aminoacyl-tRNA editing enzyme that deacylates mischarged D-aminoacyl-tRNAs. Also deacylates mischarged glycyl-tRNA(Ala), protecting cells against glycine mischarging by AlaRS. Acts via tRNA-based rather than protein-based catalysis; rejects L-amino acids rather than detecting D-amino acids in the active site. By recycling D-aminoacyl-tRNA to D-amino acids and free tRNA molecules, this enzyme counteracts the toxicity associated with the formation of D-aminoacyl-tRNA entities in vivo and helps enforce protein L-homochirality. The chain is D-aminoacyl-tRNA deacylase from Shewanella denitrificans (strain OS217 / ATCC BAA-1090 / DSM 15013).